The sequence spans 2045 residues: MASAVSPANLPAVLLQPRWKRVVGWSGPVPRPRHGHRAVAIKELIVVFGGGNEGIVDELHVYNTATNQWFIPAVRGDIPPGCAAYGFVCDGTRLLVFGGMVEYGKYSNDLYELQASRWEWKRLKAKTPKNGPPPCPRLGHSFSLVGNKCYLFGGLANDSEDPKNNIPRYLNDLYILELRPGSGVVAWDIPITYGVLPPPRESHTAVVYTEKDNKKSKLVIYGGMSGCRLGDLWTLDIETLTWNKPSLSGVAPLPRSLHSATTIGNKMYVFGGWVPLVMDDVKVATHEKEWKCTNTLACLNLDTMAWETILMDTLEDNIPRARAGHCAVAINTRLYIWSGRDGYRKAWNNQVCCKDLWYLETEKPPPPARVQLVRANTNSLEVSWGAVATADSYLLQLQKYDIPATAATATSPTPNPVPSVPANPPKSPAPAAAAPAVQPLTQVGITLVPQAATAPPSTTTIQVLPTVPGSSISVPTAARTQGVPAVLKVTGPQATTGTPLVTMRPASQAGKAPVTVTSLPASVRMVVPTQSAQGTVIGSNPQMSGMAALAAAAAATQKIPPSSAPTVLSVPAGTTIVKTVAVTPGTTTLPATVKVASSPVMVSNPATRMLKTAAAQVGTSVSSAANTSTRPIITVHKSGTVTVAQQAQVVTTVVGGVTKTITLVKSPISVPGGSALISNLGKVMSVVQTKPVQTSAVTGQASTGPVTQIIQTKGPLPAGTILKLVTSADGKPTTIITTTQASGAGTKPTILGISSVSPSTTKPGTTTIIKTIPMSAIITQAGATGVTSSPGIKSPITIITTKVMTSGTGAPAKIITAVPKIATGHGQQGVTQVVLKGAPGQPGTILRTVPMGGVRLVTPVTVSAVKPAVTTLVVKGTTGVTTLGTVTGTVSTSLAGAGAHSTSASLATPITTLGTIATLSSQVINPTAITVSAAQTTLTAAGGLTTPTITMQPVSQPTQVTLITAPSGVEAQPVHDLPVSILASPTTEQPTATVTIADSGQGDVQPGTVTLVCSNPPCETHETGTTNTATTTVVANLGGHPQPTQVQFVCDRQETAASLVTSAVGQQNGNVVRVCSNPPCETHETGTTNTATTATSNMAGQHGCSNPPCETHETGTTSTATTAMSSMGTGQQRDTRRTTNTPTVVRITVAPGALERVQGTVKPQCQTQQTNMTTTTMTVQATGAPCSAGPLLRPSVALESGSHSPAFVQLALPSVRVGLSGPSSKDMPTGRQPETYHTYTTNTPTTTRSIMVAGELGAARVVPTSTYESLQASSPSSTMTMTALEALLCPSATVTQVCSNPPCETHETGTTNTATTSNAGSAQRVCSNPPCETHETGTTHTATTATSNGGAGQPEGGQQPASGHPCETHQTTSTGTTMSVSVGTLIPDATSSHGTLESGLEVVAVPTVTSQAGSTLLASFPTQRVCSNPPCETHETGTTHTATTVTSNMSSNQDPPPAASDQGEVASTQGDSTNITSASAITTSVSSTLPRAVTTVTQSTPVPGPSVPPPEELQVSPGPRQQLPPRQLLQSASTPLMGESTEVLSASQTPELQAAVDLSSTGDPSSGQEPTTSAVVATVVVQPPPPTQSEVDQLSLPQELMAEAQAGTTTLMVTGLTPEELAVTAAAEAAAQAAATEEAQALAIQAVLQAAQQAVMGTGEPMDTSEAAAAVTQAELGHLSAEGQEGQATTIPIVLTQQELAALVQQQQQLQEAQAQAQQQHHLPTEALAPADSLNDPSIESNCLNELASAVPSTVALLPSTATESLAPSNTFVAPQPVVASPAKMQAAATLTEVANGIESLGVKPDLPPPPSKAPVKKENQWFDVGVIKGTSVMVTHYFLPPDDAVQSDDDSGTVPDYNQLKKQELQPGTAYKFRVAGINACGRGPFSEISAFKTCLPGFPGAPCAIKISKSPDGAHLTWEPPSVTSGKIIEYSVYLAIQSSQASGEPKSSTPAQLAFMRVYCGPSPSCLVQSSSLSNAHIDYTTKPAIIFRIAARNEKGYGPATQVRWLQETSKDSSGTKPASKRPMSSPEMKSAPKKSKADGQ.

An N-acetylalanine modification is found at Ala2. A Phosphoserine modification is found at Ser6. Kelch repeat units follow at residues 44–89 (LIVV…GFVC), 93–140 (RLLV…RLGH), 148–194 (KCYL…ITYG), 217–265 (KLVI…TIGN), and 266–313 (KMYV…LMDT). Residues Lys105, Lys163, and Lys244 each participate in a glycyl lysine isopeptide (Lys-Gly) (interchain with G-Cter in ubiquitin) cross-link. Lys282 participates in a covalent cross-link: Glycyl lysine isopeptide (Lys-Gly) (interchain with G-Cter in SUMO2). Lys288 carries the N6-acetyllysine modification. Residue Lys363 forms a Glycyl lysine isopeptide (Lys-Gly) (interchain with G-Cter in ubiquitin) linkage. The region spanning 366-457 (PPARVQLVRA…VPQAATAPPS (92 aa)) is the Fibronectin type-III 1 domain. The tract at residues 407–434 (ATATSPTPNPVPSVPANPPKSPAPAAAA) is disordered. Phosphoserine is present on Ser411. Residues 413 to 428 (TPNPVPSVPANPPKSP) are compositionally biased toward pro residues. The interval 500–550 (LVTMRPASQAGKAPVTVTSLPASVRMVVPTQSAQGTVIGSNPQMSGMAALA) is required for interaction with OGT. 2 positions are modified to omega-N-methylarginine: Arg504 and Arg524. Residues Ser598, Ser666, and Ser669 each carry the phosphoserine modification. The tract at residues 610–722 (LKTAAAQVGT…KGPLPAGTIL (113 aa)) is interaction with SIN3A. Residues 750–902 (ILGISSVSPS…SLAGAGAHST (153 aa)) are interaction with ZBTB17. Lys813 is modified (N6-acetyllysine). The interaction with GABP2 stretch occupies residues 813-912 (KIITAVPKIA…SASLATPITT (100 aa)). 3 HCF repeat repeats span residues 1010-1035 (TLVCSNPPCETHETGTTNTATTTVVA), 1072-1097 (VRVCSNPPCETHETGTTNTATTATSN), and 1101-1126 (QHGCSNPPCETHETGTTSTATTAMSS). The stretch at 1157–1182 (VQGTVKPQCQTQQTNMTTTTMTVQAT) is one HCF repeat 4; degenerate repeat. Phosphoserine is present on Ser1204. Arg1216 is modified (asymmetric dimethylarginine). 4 disordered regions span residues 1219–1242 (LSGPSSKDMPTGRQPETYHTYTTN), 1302–1375 (PCET…TSTG), 1444–1475 (TVTSNMSSNQDPPPAASDQGEVASTQGDSTNI), and 1494–1525 (TTVTQSTPVPGPSVPPPEELQVSPGPRQQLPP). The residue at position 1223 (Ser1223) is a Phosphoserine. HCF repeat repeat units follow at residues 1295-1320 (TQVCSNPPCETHETGTTNTATTSNAG) and 1323-1348 (QRVCSNPPCETHETGTTHTATTATSN). Over residues 1308-1321 (TGTTNTATTSNAGS) the composition is skewed to low complexity. One copy of the HCF repeat 7; degenerate repeat lies at 1358-1383 (QQPASGHPCETHQTTSTGTTMSVSVG). The stretch at 1423–1448 (QRVCSNPPCETHETGTTHTATTVTSN) is one HCF repeat 8 repeat. Thr1500 carries the phosphothreonine modification. The segment covering 1502-1511 (VPGPSVPPPE) has biased composition (pro residues). 3 positions are modified to phosphoserine: Ser1506, Ser1516, and Ser1781. 2 consecutive Fibronectin type-III domains span residues 1808–1898 (PPPP…TCLP) and 1900–2016 (FPGA…TSKD). Residues Lys1817 and Lys1818 each participate in a glycyl lysine isopeptide (Lys-Gly) (interchain with G-Cter in ubiquitin) cross-link. Ser1848 carries the post-translational modification Phosphoserine. The tract at residues 2004-2045 (ATQVRWLQETSKDSSGTKPASKRPMSSPEMKSAPKKSKADGQ) is disordered. The residue at position 2015 (Lys2015) is an N6-acetyllysine. A Glycyl lysine isopeptide (Lys-Gly) (interchain with G-Cter in SUMO2) cross-link involves residue Lys2034.

As to quaternary structure, composed predominantly of six polypeptides ranging from 110 to 150 kDa and a minor 300 kDa polypeptide. The majority of N- and C-terminal cleavage products remain tightly, albeit non-covalently, associated. Interacts with POU2F1, CREB3, ZBTB17, EGR2, E2F4, CREBZF, SP1, GABP2, Sin3 HDAC complex (SIN3A, HDAC1, HDAC2, SUDS3), SAP30, SIN3B and FHL2. Component of a MLL1 complex, composed of at least the core components KMT2A/MLL1, ASH2L, HCFC1, WDR5 and RBBP5, as well as the facultative components BACC1, CHD8, DPY30, E2F6, HCFC2, HSP70, INO80C, KANSL1, LAS1L, MAX, MCRS1, MEN1, MGA, KAT8, PELP1, PHF20, PRP31, RING2, RUVBL1, RUVBL2, SENP3, TAF1, TAF4, TAF6, TAF7, TAF9 and TEX10. Component of a THAP1/THAP3-HCFC1-OGT complex that is required for the regulation of the transcriptional activity of RRM1. Interacts directly with THAP3 (via its HBM). Interacts (via the Kelch-repeat domain) with THAP1 (via the HBM); the interaction recruits HCHC1 to the RRM1. Interacts with THAP7 and THAP11 (via the HMB). Interacts directly with OGT; the interaction, which requires the HCFC1 cleavage site domain, glycosylates and promotes the proteolytic processing of HCFC1 and retains OGT in the nucleus. Component of the SET1 complex, at least composed of the catalytic subunit (SETD1A or SETD1B), WDR5, WDR82, RBBP5, ASH2L, CXXC1, HCFC1 and DPY30. Component of the NSL complex at least composed of MOF/KAT8, KANSL1, KANSL2, KANSL3, MCRS1, PHF20, OGT1/OGT, WDR5 and HCFC1. Component of a complex at least composed of ZNF335, HCFC1, CCAR2, EMSY, MKI67, RBBP5, ASH2L and WDR5; the complex is formed as a result of interactions between components of a nuclear receptor-mediated transcription complex and a histone methylation complex. Within the complex interacts with ZNF335. Interacts with TET2 and TET3. Interacts with HCFC1R1. Interacts with THAP11. Interacts (via Kelch domain) with KMT2E (via HBM motif). Interacts with E2F1. Accessory scaffold component of the polycomb repressive deubiquitinase (PR-DUB) complex, at least composed of BAP1, one of ASXL1, ASXL2 or (probably) ASXL3 and one of MBD5 or MBD6; the PR-DUB core associates with a number of accessory proteins, including FOXK1, FOXK2, KDM1B, HCFC1, YY1 and OGT. Interacts with YY1 (via Gly-rich region); the interaction is direct. Interacts with BAP1 (via HBM-like motif). Post-translationally, proteolytically cleaved at one or several PPCE--THET sites within the HCF repeats. Further cleavage of the primary N- and C-terminal chains results in a 'trimming' and accumulation of the smaller chains. Cleavage is promoted by O-glycosylation. O-glycosylated. GlcNAcylation by OGT promotes proteolytic processing. In terms of processing, ubiquitinated. Lys-1817 and Lys-1818 are ubiquitinated both via 'Lys-48'- and 'Lys-63'-linked polyubiquitin chains. BAP1 mediated deubiquitination of 'Lys-48'-linked polyubiquitin chains; deubiquitination by BAP1 does not seem to stabilize the protein. Expressed in liver, pituitary gland, skeletal muscle, kidney, eye and brain (at protein level). Also observed at low level in heart, spleen and lung.

It is found in the nucleus. The protein resides in the cytoplasm. In terms of biological role, transcriptional coregulator. Serves as a scaffold protein, bridging interactions between transcription factors, including THAP11 and ZNF143, and transcriptional coregulators. Involved in control of the cell cycle. Also antagonizes transactivation by ZBTB17 and GABP2; represses ZBTB17 activation of the p15(INK4b) promoter and inhibits its ability to recruit p300. Coactivator for EGR2 and GABP2. Tethers the chromatin modifying Set1/Ash2 histone H3 'Lys-4' methyltransferase (H3K4me) and Sin3 histone deacetylase (HDAC) complexes (involved in the activation and repression of transcription respectively) together. As part of the NSL complex it may be involved in acetylation of nucleosomal histone H4 on several lysine residues. Recruits KMT2E to E2F1 responsive promoters promoting transcriptional activation and thereby facilitates G1 to S phase transition. Modulates expression of homeobox protein PDX1, perhaps acting in concert with transcription factor E2F1, thereby regulating pancreatic beta-cell growth and glucose-stimulated insulin secretion. May negatively modulate transcriptional activity of FOXO3. The chain is Host cell factor 1 from Mus musculus (Mouse).